The sequence spans 227 residues: 2-C-methyl-D-erythritol 4-phosphate cytidylyltransferase (227 aa).

The protein belongs to the IspD/TarI cytidylyltransferase family. IspD subfamily.

It catalyses the reaction 2-C-methyl-D-erythritol 4-phosphate + CTP + H(+) = 4-CDP-2-C-methyl-D-erythritol + diphosphate. Its pathway is isoprenoid biosynthesis; isopentenyl diphosphate biosynthesis via DXP pathway; isopentenyl diphosphate from 1-deoxy-D-xylulose 5-phosphate: step 2/6. Functionally, catalyzes the formation of 4-diphosphocytidyl-2-C-methyl-D-erythritol from CTP and 2-C-methyl-D-erythritol 4-phosphate (MEP). This is 2-C-methyl-D-erythritol 4-phosphate cytidylyltransferase from Tolumonas auensis (strain DSM 9187 / NBRC 110442 / TA 4).